Reading from the N-terminus, the 222-residue chain is uncharacterized protein (222 aa).

In terms of domain architecture, HTH gntR-type spans 8–77 (AKKNQIIYRY…NTPGYFVCKD (70 aa)).

This is an uncharacterized protein from Mycoplasma genitalium (strain ATCC 33530 / DSM 19775 / NCTC 10195 / G37) (Mycoplasmoides genitalium).